Consider the following 294-residue polypeptide: 33 kDa chaperonin (294 aa).

Disulfide bonds link Cys-236/Cys-238 and Cys-269/Cys-272.

Belongs to the HSP33 family. In terms of processing, under oxidizing conditions two disulfide bonds are formed involving the reactive cysteines. Under reducing conditions zinc is bound to the reactive cysteines and the protein is inactive.

It localises to the cytoplasm. Redox regulated molecular chaperone. Protects both thermally unfolding and oxidatively damaged proteins from irreversible aggregation. Plays an important role in the bacterial defense system toward oxidative stress. The polypeptide is 33 kDa chaperonin (Desulforamulus reducens (strain ATCC BAA-1160 / DSM 100696 / MI-1) (Desulfotomaculum reducens)).